Reading from the N-terminus, the 87-residue chain is Cell division topological specificity factor (87 aa).

Belongs to the MinE family.

Its function is as follows. Prevents the cell division inhibition by proteins MinC and MinD at internal division sites while permitting inhibition at polar sites. This ensures cell division at the proper site by restricting the formation of a division septum at the midpoint of the long axis of the cell. In Rhizobium meliloti (strain 1021) (Ensifer meliloti), this protein is Cell division topological specificity factor.